We begin with the raw amino-acid sequence, 60 residues long: Cytotoxin SP15a (60 aa).

Disulfide bonds link C3–C21, C14–C38, C42–C53, and C54–C59.

Belongs to the three-finger toxin family. Short-chain subfamily. Type IA cytotoxin sub-subfamily. As to quaternary structure, monomer in solution; Homodimer and oligomer in the presence of negatively charged lipids forming a pore with a size ranging between 20 and 30 Angstroms. As to expression, expressed by the venom gland.

It is found in the secreted. The protein localises to the target cell membrane. In terms of biological role, shows cytolytic activity on many different cells by forming pore in lipid membranes. In vivo, increases heart rate or kills the animal by cardiac arrest. In addition, it binds to heparin with high affinity, interacts with Kv channel-interacting protein 1 (KCNIP1) in a calcium-independent manner, and binds to integrin alpha-V/beta-3 (ITGAV/ITGB3) with moderate affinity. This chain is Cytotoxin SP15a, found in Naja atra (Chinese cobra).